Consider the following 494-residue polypeptide: SNF1-related protein kinase catalytic subunit alpha KIN12 (494 aa).

The Protein kinase domain occupies 19–270 (YRIGKTLGHG…ITEIRQHPWF (252 aa)). ATP-binding positions include 25–33 (LGHGSFAKV) and Lys-48. Asp-142 acts as the Proton acceptor in catalysis. Thr-175 is subject to Phosphothreonine. The tract at residues 289-386 (AKKIEEEIIQ…GLKSNVKDDK (98 aa)) is auto-inhibitory domain (AID). The UBA domain occupies 291 to 331 (KIEEEIIQNVVNIGFDRNHVVDSLANRIQNEATVAYHLILD). A regulatory domain (RD) region spans residues 293–494 (EEEIIQNVVN…VAFLRELGVL (202 aa)). The PPI stretch occupies residues 387-494 (TWTLGLQSQG…VAFLRELGVL (108 aa)). A KA1 domain is found at 445 to 493 (AIILPTVIKFEIQLYKVREGKYLLDILRIDGPQFIFFDLCVAFLRELGV).

This sequence belongs to the protein kinase superfamily. CAMK Ser/Thr protein kinase family. SNF1 subfamily. As to quaternary structure, subunit of a probable heterotrimeric complex consisting of an alpha catalytic subunit, and a beta (KINB) and a gamma (KING or SNF4) non-catalytic regulatory subunits. In terms of processing, autophosphorylated. In terms of tissue distribution, expressed at very low levels.

The catalysed reaction is L-seryl-[protein] + ATP = O-phospho-L-seryl-[protein] + ADP + H(+). The enzyme catalyses L-threonyl-[protein] + ATP = O-phospho-L-threonyl-[protein] + ADP + H(+). Its activity is regulated as follows. Activated by phosphorylation at Thr-175. Functionally, catalytic subunit of the probable trimeric SNF1-related protein kinase (SnRK) complex, a central regulator of cellular energy homeostasis, which, in response to seemingly unrelated darkness, sugar and stress conditions, activates energy-producing pathways and inhibits energy-consuming processes. May also be involved in the regulation of fatty acid synthesis by phosphorylation of acetyl-CoA carboxylase and in assimilation of nitrogen by phosphorylating nitrate reductase. The chain is SNF1-related protein kinase catalytic subunit alpha KIN12 from Arabidopsis thaliana (Mouse-ear cress).